The chain runs to 687 residues: Homoaconitase, mitochondrial (687 aa).

The transit peptide at 1-18 (MFAFRNRAVTQTLLVRRY) directs the protein to the mitochondrion. [4Fe-4S] cluster is bound by residues Cys340, Cys400, and Cys403. Positions 481 to 490 (EAEADAEAAE) are enriched in acidic residues. Residues 481–500 (EAEADAEAAESDPAPSGGVL) form a disordered region.

The protein belongs to the aconitase/IPM isomerase family. The cofactor is [4Fe-4S] cluster.

It is found in the mitochondrion. It catalyses the reaction (2R,3S)-homoisocitrate = cis-homoaconitate + H2O. The protein operates within amino-acid biosynthesis; L-lysine biosynthesis via AAA pathway; L-alpha-aminoadipate from 2-oxoglutarate: step 3/5. In terms of biological role, catalyzes the reversible hydration of cis-homoaconitate to (2R,3S)-homoisocitrate, a step in the alpha-aminoadipate pathway for lysine biosynthesis. This chain is Homoaconitase, mitochondrial (LYS4), found in Yarrowia lipolytica (strain CLIB 122 / E 150) (Yeast).